The following is a 72-amino-acid chain: Large ribosomal subunit protein bL28 (72 aa).

This sequence belongs to the bacterial ribosomal protein bL28 family.

In Chlorobium chlorochromatii (strain CaD3), this protein is Large ribosomal subunit protein bL28.